Here is a 392-residue protein sequence, read N- to C-terminus: Potassium/proton antiporter CemA (392 aa).

4 consecutive transmembrane segments (helical) span residues 174-194 (FLAS…VWWL), 269-289 (SLAN…MLSL), 316-336 (FLIL…WEVI), and 352-372 (FIFM…KYWI).

The protein belongs to the CemA family.

Its subcellular location is the plastid. It is found in the chloroplast inner membrane. It catalyses the reaction K(+)(in) + H(+)(out) = K(+)(out) + H(+)(in). Functionally, contributes to K(+)/H(+) antiport activity by supporting proton efflux to control proton extrusion and homeostasis in chloroplasts in a light-dependent manner to modulate photosynthesis. Prevents excessive induction of non-photochemical quenching (NPQ) under continuous-light conditions. Indirectly promotes efficient inorganic carbon uptake into chloroplasts. The chain is Potassium/proton antiporter CemA from Nephroselmis olivacea (Green alga).